The sequence spans 135 residues: MEALLKWSAAVLAAAVSFLYGEWTILLSILLTLVVIDYGTGLVAAGVTGNINSRVGLIGITRKVFIFVMVAIAHMIDTVLLEVGIETEALIFMAAVVFYIVNELISIFENAGRMGLPVPKQLKQAISILKGDESK.

4 helical membrane-spanning segments follow: residues 7 to 25 (WSAAVLAAAVSFLYGEWTI), 29 to 51 (ILLTLVVIDYGTGLVAAGVTGNI), 64 to 85 (VFIFVMVAIAHMIDTVLLEVGI), and 89 to 108 (ALIFMAAVVFYIVNELISIF).

It belongs to the bacteriophage holin family. Cp-1 holin subfamily.

Its subcellular location is the cell membrane. This is an uncharacterized protein from Halalkalibacterium halodurans (strain ATCC BAA-125 / DSM 18197 / FERM 7344 / JCM 9153 / C-125) (Bacillus halodurans).